A 285-amino-acid chain; its full sequence is Vesicle-associated membrane protein 725 (285 aa).

Residues 1–261 (MDRSVVPISL…MWFENMKIKL (261 aa)) lie on the Cytoplasmic side of the membrane. Residues 75–179 (FVARGTVILV…SLNREFGSKL (105 aa)) enclose the Longin domain. The v-SNARE coiled-coil homology domain maps to 195–255 (KLAKVKAQVT…TKIRRKMWFE (61 aa)). Residues 262 to 282 (IVLGIIITLILIIILSVCGGF) form a helical; Anchor for type IV membrane protein membrane-spanning segment. Topologically, residues 283-285 (KCT) are vesicular.

Belongs to the synaptobrevin family. In terms of tissue distribution, expressed in flowers, leaves, stems and roots.

The protein localises to the cell membrane. Its subcellular location is the early endosome membrane. Involved in the targeting and/or fusion of transport vesicles to their target membrane. The sequence is that of Vesicle-associated membrane protein 725 from Arabidopsis thaliana (Mouse-ear cress).